The primary structure comprises 157 residues: Small ribosomal subunit protein uS7 (157 aa).

The protein belongs to the universal ribosomal protein uS7 family. In terms of assembly, part of the 30S ribosomal subunit. Contacts proteins S9 and S11.

Its function is as follows. One of the primary rRNA binding proteins, it binds directly to 16S rRNA where it nucleates assembly of the head domain of the 30S subunit. Is located at the subunit interface close to the decoding center, probably blocks exit of the E-site tRNA. This chain is Small ribosomal subunit protein uS7, found in Albidiferax ferrireducens (strain ATCC BAA-621 / DSM 15236 / T118) (Rhodoferax ferrireducens).